Here is a 241-residue protein sequence, read N- to C-terminus: CD99 antigen-like protein 2 (241 aa).

Positions 1 to 23 (MAKWGSPFVFALACLALSWRVYG) are cleaved as a signal peptide. Residues 24–173 (DDFDLYDALG…TGFGSQAETG (150 aa)) are Extracellular-facing. The interval 30-168 (DALGDPTEKP…NDGSDTGFGS (139 aa)) is disordered. Residues 143-154 (GGGGGGGGGRAT) are compositionally biased toward gly residues. Residues 174–196 (TIAGIASALAMALIGAVSSYISY) traverse the membrane as a helical segment. At 197–241 (QQKKFCFSIQEGLNAEYVKGEHMEAVVSEEPQVKYSVVESQSAIP) the chain is on the cytoplasmic side.

This sequence belongs to the CD99 family.

It is found in the cell membrane. The protein resides in the cell junction. Functionally, may function as a homophilic adhesion molecule. This Xenopus tropicalis (Western clawed frog) protein is CD99 antigen-like protein 2 (cd99l2).